A 1141-amino-acid polypeptide reads, in one-letter code: DNA-directed RNA polymerase subunit beta (1141 aa).

It belongs to the RNA polymerase beta chain family. As to quaternary structure, the RNAP catalytic core consists of 2 alpha, 1 beta, 1 beta' and 1 omega subunit. When a sigma factor is associated with the core the holoenzyme is formed, which can initiate transcription.

It catalyses the reaction RNA(n) + a ribonucleoside 5'-triphosphate = RNA(n+1) + diphosphate. DNA-dependent RNA polymerase catalyzes the transcription of DNA into RNA using the four ribonucleoside triphosphates as substrates. This is DNA-directed RNA polymerase subunit beta from Frankia alni (strain DSM 45986 / CECT 9034 / ACN14a).